The following is a 215-amino-acid chain: Phosphatidylserine decarboxylase proenzyme (215 aa).

S181 functions as the Schiff-base intermediate with substrate; via pyruvic acid in the catalytic mechanism. Residue S181 is modified to Pyruvic acid (Ser); by autocatalysis.

The protein belongs to the phosphatidylserine decarboxylase family. PSD-A subfamily. Heterodimer of a large membrane-associated beta subunit and a small pyruvoyl-containing alpha subunit. Requires pyruvate as cofactor. Is synthesized initially as an inactive proenzyme. Formation of the active enzyme involves a self-maturation process in which the active site pyruvoyl group is generated from an internal serine residue via an autocatalytic post-translational modification. Two non-identical subunits are generated from the proenzyme in this reaction, and the pyruvate is formed at the N-terminus of the alpha chain, which is derived from the carboxyl end of the proenzyme. The post-translation cleavage follows an unusual pathway, termed non-hydrolytic serinolysis, in which the side chain hydroxyl group of the serine supplies its oxygen atom to form the C-terminus of the beta chain, while the remainder of the serine residue undergoes an oxidative deamination to produce ammonia and the pyruvoyl prosthetic group on the alpha chain.

It is found in the cell membrane. The catalysed reaction is a 1,2-diacyl-sn-glycero-3-phospho-L-serine + H(+) = a 1,2-diacyl-sn-glycero-3-phosphoethanolamine + CO2. The protein operates within phospholipid metabolism; phosphatidylethanolamine biosynthesis; phosphatidylethanolamine from CDP-diacylglycerol: step 2/2. Its function is as follows. Catalyzes the formation of phosphatidylethanolamine (PtdEtn) from phosphatidylserine (PtdSer). This Polynucleobacter asymbioticus (strain DSM 18221 / CIP 109841 / QLW-P1DMWA-1) (Polynucleobacter necessarius subsp. asymbioticus) protein is Phosphatidylserine decarboxylase proenzyme.